The sequence spans 534 residues: CTP synthase (534 aa).

The segment at 1 to 265 (MKYIVVTGGV…TTRLMKHLKL (265 aa)) is amidoligase domain. Residue Ser-12 coordinates CTP. Ser-12 is a binding site for UTP. 13 to 18 (GLGKGI) is an ATP binding site. Tyr-53 provides a ligand contact to L-glutamine. Asp-70 contacts ATP. Residues Asp-70 and Glu-140 each contribute to the Mg(2+) site. Residues 147–149 (DIE), 186–191 (KTKPSQ), and Lys-222 contribute to the CTP site. Residues 186 to 191 (KTKPSQ) and Lys-222 each bind UTP. Positions 289–530 (KLAIVGKYTN…VRAMCKYNKE (242 aa)) constitute a Glutamine amidotransferase type-1 domain. Position 352 (Gly-352) interacts with L-glutamine. Cys-379 (nucleophile; for glutamine hydrolysis) is an active-site residue. Residues 380 to 383 (LGMQ), Glu-403, and Arg-460 contribute to the L-glutamine site. Catalysis depends on residues His-503 and Glu-505.

It belongs to the CTP synthase family. As to quaternary structure, homotetramer.

The catalysed reaction is UTP + L-glutamine + ATP + H2O = CTP + L-glutamate + ADP + phosphate + 2 H(+). The enzyme catalyses L-glutamine + H2O = L-glutamate + NH4(+). It carries out the reaction UTP + NH4(+) + ATP = CTP + ADP + phosphate + 2 H(+). It participates in pyrimidine metabolism; CTP biosynthesis via de novo pathway; CTP from UDP: step 2/2. Allosterically activated by GTP, when glutamine is the substrate; GTP has no effect on the reaction when ammonia is the substrate. The allosteric effector GTP functions by stabilizing the protein conformation that binds the tetrahedral intermediate(s) formed during glutamine hydrolysis. Inhibited by the product CTP, via allosteric rather than competitive inhibition. In terms of biological role, catalyzes the ATP-dependent amination of UTP to CTP with either L-glutamine or ammonia as the source of nitrogen. Regulates intracellular CTP levels through interactions with the four ribonucleotide triphosphates. The chain is CTP synthase from Methanosarcina acetivorans (strain ATCC 35395 / DSM 2834 / JCM 12185 / C2A).